The sequence spans 303 residues: Glycine--tRNA ligase alpha subunit (303 aa).

This sequence belongs to the class-II aminoacyl-tRNA synthetase family. As to quaternary structure, tetramer of two alpha and two beta subunits.

The protein localises to the cytoplasm. It carries out the reaction tRNA(Gly) + glycine + ATP = glycyl-tRNA(Gly) + AMP + diphosphate. This is Glycine--tRNA ligase alpha subunit from Cronobacter sakazakii (strain ATCC BAA-894) (Enterobacter sakazakii).